The chain runs to 63 residues: Megourin-3 (63 aa).

In terms of assembly, monomer. In terms of processing, contains four disulfide bonds.

The protein localises to the secreted. Has antimicrobial activity against Gram-positive bacteria and fungi. This Megoura viciae (Vetch aphid) protein is Megourin-3.